Consider the following 300-residue polypeptide: 4-hydroxy-tetrahydrodipicolinate synthase (300 aa).

Thr-55 contacts pyruvate. Tyr-143 functions as the Proton donor/acceptor in the catalytic mechanism. Lys-171 (schiff-base intermediate with substrate) is an active-site residue. Ile-211 contacts pyruvate.

Belongs to the DapA family. Homotetramer; dimer of dimers.

Its subcellular location is the cytoplasm. The enzyme catalyses L-aspartate 4-semialdehyde + pyruvate = (2S,4S)-4-hydroxy-2,3,4,5-tetrahydrodipicolinate + H2O + H(+). The protein operates within amino-acid biosynthesis; L-lysine biosynthesis via DAP pathway; (S)-tetrahydrodipicolinate from L-aspartate: step 3/4. Catalyzes the condensation of (S)-aspartate-beta-semialdehyde [(S)-ASA] and pyruvate to 4-hydroxy-tetrahydrodipicolinate (HTPA). The sequence is that of 4-hydroxy-tetrahydrodipicolinate synthase from Mycolicibacterium paratuberculosis (strain ATCC BAA-968 / K-10) (Mycobacterium paratuberculosis).